The following is a 166-amino-acid chain: Endoribonuclease YbeY (166 aa).

The Zn(2+) site is built by His132, His136, and His142.

This sequence belongs to the endoribonuclease YbeY family. It depends on Zn(2+) as a cofactor.

It localises to the cytoplasm. Single strand-specific metallo-endoribonuclease involved in late-stage 70S ribosome quality control and in maturation of the 3' terminus of the 16S rRNA. The polypeptide is Endoribonuclease YbeY (Clostridium botulinum (strain 657 / Type Ba4)).